A 310-amino-acid polypeptide reads, in one-letter code: tRNA pseudouridine synthase B (310 aa).

D49 (nucleophile) is an active-site residue.

This sequence belongs to the pseudouridine synthase TruB family. Type 1 subfamily.

The enzyme catalyses uridine(55) in tRNA = pseudouridine(55) in tRNA. Functionally, responsible for synthesis of pseudouridine from uracil-55 in the psi GC loop of transfer RNAs. The protein is tRNA pseudouridine synthase B of Idiomarina loihiensis (strain ATCC BAA-735 / DSM 15497 / L2-TR).